The following is a 477-amino-acid chain: Aspartyl/glutamyl-tRNA(Asn/Gln) amidotransferase subunit B (477 aa).

It belongs to the GatB/GatE family. GatB subfamily. In terms of assembly, heterotrimer of A, B and C subunits.

The catalysed reaction is L-glutamyl-tRNA(Gln) + L-glutamine + ATP + H2O = L-glutaminyl-tRNA(Gln) + L-glutamate + ADP + phosphate + H(+). It carries out the reaction L-aspartyl-tRNA(Asn) + L-glutamine + ATP + H2O = L-asparaginyl-tRNA(Asn) + L-glutamate + ADP + phosphate + 2 H(+). Its function is as follows. Allows the formation of correctly charged Asn-tRNA(Asn) or Gln-tRNA(Gln) through the transamidation of misacylated Asp-tRNA(Asn) or Glu-tRNA(Gln) in organisms which lack either or both of asparaginyl-tRNA or glutaminyl-tRNA synthetases. The reaction takes place in the presence of glutamine and ATP through an activated phospho-Asp-tRNA(Asn) or phospho-Glu-tRNA(Gln). The sequence is that of Aspartyl/glutamyl-tRNA(Asn/Gln) amidotransferase subunit B from Nitrosococcus oceani (strain ATCC 19707 / BCRC 17464 / JCM 30415 / NCIMB 11848 / C-107).